The chain runs to 205 residues: Urease accessory protein UreE (205 aa).

A compositionally biased stretch (basic residues) spans 178–196 (AHFHAGGHGHVHSGHGHGG). The segment at 178–205 (AHFHAGGHGHVHSGHGHGGKHGEHDAES) is disordered.

This sequence belongs to the UreE family.

The protein localises to the cytoplasm. Involved in urease metallocenter assembly. Binds nickel. Probably functions as a nickel donor during metallocenter assembly. The protein is Urease accessory protein UreE of Bordetella pertussis (strain Tohama I / ATCC BAA-589 / NCTC 13251).